We begin with the raw amino-acid sequence, 401 residues long: S-adenosylmethionine synthase (401 aa).

136 to 141 contributes to the ATP binding site; the sequence is GQGSVD.

It belongs to the AdoMet synthase 2 family. The cofactor is Mg(2+).

It carries out the reaction L-methionine + ATP + H2O = S-adenosyl-L-methionine + phosphate + diphosphate. Its pathway is amino-acid biosynthesis; S-adenosyl-L-methionine biosynthesis; S-adenosyl-L-methionine from L-methionine: step 1/1. Catalyzes the formation of S-adenosylmethionine from methionine and ATP. The polypeptide is S-adenosylmethionine synthase (Pyrococcus furiosus (strain ATCC 43587 / DSM 3638 / JCM 8422 / Vc1)).